Consider the following 293-residue polypeptide: Elongation factor Ts (293 aa).

An involved in Mg(2+) ion dislocation from EF-Tu region spans residues 81–84 (TDFV).

Belongs to the EF-Ts family.

The protein localises to the cytoplasm. Its function is as follows. Associates with the EF-Tu.GDP complex and induces the exchange of GDP to GTP. It remains bound to the aminoacyl-tRNA.EF-Tu.GTP complex up to the GTP hydrolysis stage on the ribosome. The protein is Elongation factor Ts of Thioalkalivibrio sulfidiphilus (strain HL-EbGR7).